The sequence spans 158 residues: 2-C-methyl-D-erythritol 2,4-cyclodiphosphate synthase (158 aa).

Residues aspartate 8 and histidine 10 each contribute to the a divalent metal cation site. Residues 8-10 and 34-35 contribute to the 4-CDP-2-C-methyl-D-erythritol 2-phosphate site; these read DVH and HS. Histidine 42 contributes to the a divalent metal cation binding site. 4-CDP-2-C-methyl-D-erythritol 2-phosphate is bound by residues 56–58, 61–65, 100–106, 132–135, phenylalanine 139, and lysine 142; these read DIG, FPDTD, AQKPKML, and TTEE.

This sequence belongs to the IspF family. In terms of assembly, homotrimer. It depends on a divalent metal cation as a cofactor.

The enzyme catalyses 4-CDP-2-C-methyl-D-erythritol 2-phosphate = 2-C-methyl-D-erythritol 2,4-cyclic diphosphate + CMP. Its pathway is isoprenoid biosynthesis; isopentenyl diphosphate biosynthesis via DXP pathway; isopentenyl diphosphate from 1-deoxy-D-xylulose 5-phosphate: step 4/6. Involved in the biosynthesis of isopentenyl diphosphate (IPP) and dimethylallyl diphosphate (DMAPP), two major building blocks of isoprenoid compounds. Catalyzes the conversion of 4-diphosphocytidyl-2-C-methyl-D-erythritol 2-phosphate (CDP-ME2P) to 2-C-methyl-D-erythritol 2,4-cyclodiphosphate (ME-CPP) with a corresponding release of cytidine 5-monophosphate (CMP). The chain is 2-C-methyl-D-erythritol 2,4-cyclodiphosphate synthase from Clostridium tetani (strain Massachusetts / E88).